Here is a 382-residue protein sequence, read N- to C-terminus: Flap endonuclease 1-B (382 aa).

The segment at 1-104 is N-domain; the sequence is MGIHGLAKLI…GELAKRSERR (104 aa). Aspartate 34 lines the Mg(2+) pocket. DNA is bound by residues arginine 47 and arginine 70. The Mg(2+) site is built by aspartate 86, glutamate 158, glutamate 160, aspartate 179, and aspartate 181. Residues 122 to 253 are I-domain; sequence NIEKFNKRLV…KRAIDLIRQH (132 aa). Glutamate 158 is a binding site for DNA. The DNA site is built by glycine 231 and aspartate 233. Aspartate 233 serves as a coordination point for Mg(2+). Residues 336–344 are interaction with PCNA; it reads TQGRLDDFF. A disordered region spans residues 352 to 382; sequence STKRKEVESKGSTKKKSKTGGTPAGKFKRGK.

It belongs to the XPG/RAD2 endonuclease family. FEN1 subfamily. Interacts with PCNA. Three molecules of fen1 bind to one PCNA trimer with each molecule binding to one PCNA monomer. PCNA stimulates the nuclease activity without altering cleavage specificity. It depends on Mg(2+) as a cofactor. Phosphorylated. Phosphorylation upon DNA damage induces relocalization to the nuclear plasma.

The protein localises to the nucleus. It localises to the nucleolus. Its subcellular location is the nucleoplasm. The protein resides in the mitochondrion. Functionally, structure-specific nuclease with 5'-flap endonuclease and 5'-3' exonuclease activities involved in DNA replication and repair. During DNA replication, cleaves the 5'-overhanging flap structure that is generated by displacement synthesis when DNA polymerase encounters the 5'-end of a downstream Okazaki fragment. It enters the flap from the 5'-end and then tracks to cleave the flap base, leaving a nick for ligation. Also involved in the long patch base excision repair (LP-BER) pathway, by cleaving within the apurinic/apyrimidinic (AP) site-terminated flap. Acts as a genome stabilization factor that prevents flaps from equilibrating into structures that lead to duplications and deletions. Also possesses 5'-3' exonuclease activity on nicked or gapped double-stranded DNA, and exhibits RNase H activity. Also involved in replication and repair of rDNA and in repairing mitochondrial DNA. The sequence is that of Flap endonuclease 1-B (fen1-b) from Xenopus laevis (African clawed frog).